The following is a 323-amino-acid chain: MAALIAENFRFLSLFFKSKDVMIFNGLVALGTVGSQELFSVVAFHCPCSPARNYLYGLTAIGVPALALFLIGVILNNHTWNLVAECQYRRAKNCSAAPTFLLLSSILGRAAVAPVTWSVISLLRGEAYVCALSEFVDPSSLTAGDEGFPPDHATEILARFPCGEGPANLSGFREEVSRRLKYESQLFGWLLIGVVAILVFLTKCFKHYCSPLSYRQEAYWAQYRTNEDQLFQRTAEVHSRVLAANNVRRFFGFVALNKDDEELVTKFPVEGTQPRPQWNAITGVYLYRENQGLPLYSRLHKWAQGLTGNGTAPDNVEMALLTV.

The Cytoplasmic segment spans residues 1–21 (MAALIAENFRFLSLFFKSKDV). A central pore region spans residues 14–39 (LFFKSKDVMIFNGLVALGTVGSQELF). The chain crosses the membrane as a helical span at residues 22–43 (MIFNGLVALGTVGSQELFSVVA). Over 44–52 (FHCPCSPAR) the chain is Extracellular. Cystine bridges form between cysteine 46–cysteine 130 and cysteine 48–cysteine 162. Residues 53 to 76 (NYLYGLTAIGVPALALFLIGVILN) traverse the membrane as a helical segment. Residues 77–101 (NHTWNLVAECQYRRAKNCSAAPTFL) are Cytoplasmic-facing. The chain crosses the membrane as a helical span at residues 102-132 (LLSSILGRAAVAPVTWSVISLLRGEAYVCAL). The Extracellular portion of the chain corresponds to 133 to 179 (SEFVDPSSLTAGDEGFPPDHATEILARFPCGEGPANLSGFREEVSRR). Residues 145–152 (DEGFPPDH) are hemichannel docking. A helical transmembrane segment spans residues 180–206 (LKYESQLFGWLLIGVVAILVFLTKCFK). At 207–323 (HYCSPLSYRQ…DNVEMALLTV (117 aa)) the chain is on the cytoplasmic side. The tract at residues 214 to 251 (YRQEAYWAQYRTNEDQLFQRTAEVHSRVLAANNVRRFF) is intersubunit interaction.

It belongs to the CALHM family. Homo-undecamer. Two undecameric hemichannels can assemble in a head-to-head manner to form a gap junction.

It is found in the cell membrane. It carries out the reaction ATP(in) = ATP(out). Functionally, pore-forming subunit of Ca(2+) homeostasis modulator channels. Mediates ATP release from astrocytes and ATP-induced Ca(2+) influx in microglia thus regulating neuronal ATP and Ca(2+) homeostasis, synaptic transmission and neuroinflammatory response. May form intercellular gap junctions. The gating mechanism remains unknown. The polypeptide is Calcium homeostasis modulator protein 2 (Calhm2) (Rattus norvegicus (Rat)).